A 205-amino-acid polypeptide reads, in one-letter code: Putative epidermin response regulator (205 aa).

The ompR/PhoB-type DNA-binding region spans 103–200 (KYIKYVNDDF…ERKLGYKILI (98 aa)).

To the C-terminus of E.coli phosphate regulon transcriptional regulatory protein PhoB.

The protein is Putative epidermin response regulator (epiQ) of Staphylococcus epidermidis.